A 432-amino-acid chain; its full sequence is MEIATVVKANGGCEADRRRLRRLRCSVKDYDWGKIGSDSLVYRVYAANSDYEIDPTRPYAELWMGTHESGPSYLEDADGSNGVTLRSWITENPKSLGNRVLEKWGCDLPFLFKVLSVARPLSIQAHPDKKLAKKMHKAHPNLYKDDNHKPEMALAYTQFEALCGFIPLQELKSVIRAIPEIEELVGSEEANQVFCITEHDEEKVKSVVRTIFTLLMSADADTTKKIVSKLKRRLHMESQERQLTDKERLVLKLEKQYPNDIGVISAFFFNYVKLNPGEALYLGANEPHAYLFGECLEVMATSDNVVRAGLTSKPLDIQTLCSMLSYKLGYPEILKGTRIRPYITRYLPPFEEFEVDLCDLPSGASTVFPSVPGPSLLLVLQGEGRMSTEASADGISMGDVLFVPADTEIHLRSSSDLKLYRAGINSRFLFPL.

N-acetylmethionine is present on Met1. The Zn(2+) site is built by Gln124, His126, Glu151, and His288. Residue Arg307 is part of the active site.

Belongs to the mannose-6-phosphate isomerase type 1 family. Zn(2+) serves as cofactor. Constitutively expressed in both vegetative and reproductive organs under normal growth conditions (at protein level).

The catalysed reaction is D-mannose 6-phosphate = D-fructose 6-phosphate. Its pathway is nucleotide-sugar biosynthesis; GDP-alpha-D-mannose biosynthesis; alpha-D-mannose 1-phosphate from D-fructose 6-phosphate: step 1/2. Inhibited by EDTA, Zn(2+), Cd(2+), Co(2+), p-chloromercuribenzoate and L-ascorbic acid (AsA). Functionally, phosphomannose isomerase involved in the synthesis of the GDP-mannose and dolichol-phosphate-mannose required for a number of critical mannosyl transfer reactions. Involved in the ascorbic acid (AsA) biosynthesis. Required during the endosperm development. This chain is Mannose-6-phosphate isomerase 1 (PMI1), found in Arabidopsis thaliana (Mouse-ear cress).